A 199-amino-acid polypeptide reads, in one-letter code: GTP cyclohydrolase-2 (199 aa).

Residue arginine 49 to glutamate 53 participates in GTP binding. Zn(2+) is bound by residues cysteine 54, cysteine 65, and cysteine 67. GTP contacts are provided by residues glutamine 70, glutamate 92–arginine 94, and threonine 114. The active-site Proton acceptor is the aspartate 126. Catalysis depends on arginine 128, which acts as the Nucleophile. GTP-binding residues include threonine 149 and lysine 154.

The protein belongs to the GTP cyclohydrolase II family. In terms of assembly, homodimer. The cofactor is Zn(2+).

The catalysed reaction is GTP + 4 H2O = 2,5-diamino-6-hydroxy-4-(5-phosphoribosylamino)-pyrimidine + formate + 2 phosphate + 3 H(+). Its pathway is cofactor biosynthesis; riboflavin biosynthesis; 5-amino-6-(D-ribitylamino)uracil from GTP: step 1/4. In terms of biological role, catalyzes the conversion of GTP to 2,5-diamino-6-ribosylamino-4(3H)-pyrimidinone 5'-phosphate (DARP), formate and pyrophosphate. This Blochmanniella floridana protein is GTP cyclohydrolase-2.